Here is a 191-residue protein sequence, read N- to C-terminus: Peptide methionine sulfoxide reductase MsrA (191 aa).

Cys21 is a catalytic residue.

This sequence belongs to the MsrA Met sulfoxide reductase family.

The enzyme catalyses L-methionyl-[protein] + [thioredoxin]-disulfide + H2O = L-methionyl-(S)-S-oxide-[protein] + [thioredoxin]-dithiol. The catalysed reaction is [thioredoxin]-disulfide + L-methionine + H2O = L-methionine (S)-S-oxide + [thioredoxin]-dithiol. Functionally, has an important function as a repair enzyme for proteins that have been inactivated by oxidation. Catalyzes the reversible oxidation-reduction of methionine sulfoxide in proteins to methionine. In Ralstonia nicotianae (strain ATCC BAA-1114 / GMI1000) (Ralstonia solanacearum), this protein is Peptide methionine sulfoxide reductase MsrA.